The sequence spans 338 residues: Ornithine carbamoyltransferase (338 aa).

Carbamoyl phosphate is bound by residues 56-59 (STRT), Arg-107, and 134-137 (HPTQ). L-ornithine is bound by residues Asn-168, Asp-232, and 236 to 237 (SM). Carbamoyl phosphate contacts are provided by residues 274-275 (CL) and Arg-320.

The protein belongs to the aspartate/ornithine carbamoyltransferase superfamily. OTCase family.

It localises to the cytoplasm. The enzyme catalyses carbamoyl phosphate + L-ornithine = L-citrulline + phosphate + H(+). The protein operates within amino-acid biosynthesis; L-arginine biosynthesis; L-arginine from L-ornithine and carbamoyl phosphate: step 1/3. Functionally, reversibly catalyzes the transfer of the carbamoyl group from carbamoyl phosphate (CP) to the N(epsilon) atom of ornithine (ORN) to produce L-citrulline. The chain is Ornithine carbamoyltransferase (argI) from Buchnera aphidicola subsp. Acyrthosiphon pisum (strain APS) (Acyrthosiphon pisum symbiotic bacterium).